An 870-amino-acid polypeptide reads, in one-letter code: Leucine--tRNA ligase (870 aa).

The 'HIGH' region motif lies at 43 to 53 (PYPSGRLHMGH). The short motif at 626-630 (KMSKS) is the 'KMSKS' region element. Residue Lys-629 coordinates ATP.

It belongs to the class-I aminoacyl-tRNA synthetase family.

The protein resides in the cytoplasm. It carries out the reaction tRNA(Leu) + L-leucine + ATP = L-leucyl-tRNA(Leu) + AMP + diphosphate. This chain is Leucine--tRNA ligase, found in Pseudoalteromonas atlantica (strain T6c / ATCC BAA-1087).